Here is a 319-residue protein sequence, read N- to C-terminus: Aspartate carbamoyltransferase catalytic subunit (319 aa).

Residues Arg57 and Thr58 each contribute to the carbamoyl phosphate site. Residue Lys85 participates in L-aspartate binding. Carbamoyl phosphate-binding residues include Arg107, His140, and Gln143. L-aspartate-binding residues include Arg173 and Arg227. The carbamoyl phosphate site is built by Gly268 and Pro269.

The protein belongs to the aspartate/ornithine carbamoyltransferase superfamily. ATCase family. As to quaternary structure, heterododecamer (2C3:3R2) of six catalytic PyrB chains organized as two trimers (C3), and six regulatory PyrI chains organized as three dimers (R2).

It carries out the reaction carbamoyl phosphate + L-aspartate = N-carbamoyl-L-aspartate + phosphate + H(+). It functions in the pathway pyrimidine metabolism; UMP biosynthesis via de novo pathway; (S)-dihydroorotate from bicarbonate: step 2/3. Its function is as follows. Catalyzes the condensation of carbamoyl phosphate and aspartate to form carbamoyl aspartate and inorganic phosphate, the committed step in the de novo pyrimidine nucleotide biosynthesis pathway. The protein is Aspartate carbamoyltransferase catalytic subunit of Mycobacterium tuberculosis (strain ATCC 25177 / H37Ra).